Consider the following 46-residue polypeptide: Photosystem II reaction center protein K (46 aa).

Residues 1-9 (MLILFNTFA) constitute a propeptide that is removed on maturation. Residues 25–45 (LPLIPLFFFLLVFVWQAAVGF) traverse the membrane as a helical segment.

This sequence belongs to the PsbK family. In terms of assembly, PSII is composed of 1 copy each of membrane proteins PsbA, PsbB, PsbC, PsbD, PsbE, PsbF, PsbH, PsbI, PsbJ, PsbK, PsbL, PsbM, PsbT, PsbX, PsbY, Psb30/Ycf12, peripheral proteins PsbO, CyanoQ (PsbQ), PsbU, PsbV and a large number of cofactors. It forms dimeric complexes.

It is found in the cellular thylakoid membrane. Functionally, one of the components of the core complex of photosystem II (PSII). PSII is a light-driven water:plastoquinone oxidoreductase that uses light energy to abstract electrons from H(2)O, generating O(2) and a proton gradient subsequently used for ATP formation. It consists of a core antenna complex that captures photons, and an electron transfer chain that converts photonic excitation into a charge separation. The sequence is that of Photosystem II reaction center protein K from Prochlorococcus marinus (strain MIT 9301).